A 114-amino-acid polypeptide reads, in one-letter code: Large ribosomal subunit protein P2 (114 aa).

The segment at 84-114 (TDALQAGSKKGETKEGPKEESDEDMGFGLFD) is disordered. Basic and acidic residues predominate over residues 92 to 102 (KKGETKEGPKE).

The protein belongs to the eukaryotic ribosomal protein P1/P2 family. P1 and P2 exist as dimers at the large ribosomal subunit. Phosphorylated.

In terms of biological role, plays an important role in the elongation step of protein synthesis. The sequence is that of Large ribosomal subunit protein P2 (rpp-2) from Brugia malayi (Filarial nematode worm).